Reading from the N-terminus, the 178-residue chain is Large ribosomal subunit protein uL5 (178 aa).

Belongs to the universal ribosomal protein uL5 family. As to quaternary structure, part of the 50S ribosomal subunit; part of the 5S rRNA/L5/L18/L25 subcomplex. Contacts the 5S rRNA and the P site tRNA. Forms a bridge to the 30S subunit in the 70S ribosome.

In terms of biological role, this is one of the proteins that bind and probably mediate the attachment of the 5S RNA into the large ribosomal subunit, where it forms part of the central protuberance. In the 70S ribosome it contacts protein S13 of the 30S subunit (bridge B1b), connecting the 2 subunits; this bridge is implicated in subunit movement. Contacts the P site tRNA; the 5S rRNA and some of its associated proteins might help stabilize positioning of ribosome-bound tRNAs. In Psychrobacter sp. (strain PRwf-1), this protein is Large ribosomal subunit protein uL5.